The following is an 86-amino-acid chain: Small ribosomal subunit protein bS20 (86 aa).

It belongs to the bacterial ribosomal protein bS20 family.

Binds directly to 16S ribosomal RNA. The protein is Small ribosomal subunit protein bS20 of Sulfurimonas denitrificans (strain ATCC 33889 / DSM 1251) (Thiomicrospira denitrificans (strain ATCC 33889 / DSM 1251)).